A 92-amino-acid polypeptide reads, in one-letter code: Small ribosomal subunit protein bS20 (92 aa).

This sequence belongs to the bacterial ribosomal protein bS20 family.

Functionally, binds directly to 16S ribosomal RNA. The polypeptide is Small ribosomal subunit protein bS20 (Magnetococcus marinus (strain ATCC BAA-1437 / JCM 17883 / MC-1)).